A 228-amino-acid polypeptide reads, in one-letter code: HTH-type transcriptional regulator ArcR (228 aa).

22-141 (SYINIPVGVL…VKLFSLLSET (120 aa)) serves as a coordination point for a nucleoside 3',5'-cyclic phosphate. In terms of domain architecture, HTH crp-type spans 155–228 (KLAKERVTKI…SKNWLVSKDL (74 aa)). Positions 188 to 207 (IQLLSDMAGISRETTSHIIN) form a DNA-binding region, H-T-H motif.

It is found in the cytoplasm. Functionally, positively regulates the expression of the arcABDCR operon under anaerobic conditions, thus playing an essential role in arginine catabolism. May also control the expression of genes encoding proteins which are involved in anaerobic metabolism. Can bind cyclic AMP. The chain is HTH-type transcriptional regulator ArcR (arcR) from Staphylococcus epidermidis (strain ATCC 12228 / FDA PCI 1200).